The chain runs to 358 residues: Cyclin-D1-binding protein 1 (358 aa).

Interaction with TCF3 regions lie at residues 1–183 and 149–358; these read MESA…VDLV and ISYN…EVES. Interaction with RPLP0 stretches follow at residues 1–189 and 238–358; these read MESA…AHEE and LIIP…EVES. The segment at 1–207 is required for interaction with CCND1; sequence MESAAVSAAP…DPYCGLLNDI (207 aa).

This sequence belongs to the CCNDBP1 family. In terms of assembly, interacts with CCND1 and GRAP2. May also interact with COPS5, RPLP0, SIRT6, SYF2 and TCF3. Phosphorylated.

The protein localises to the cytoplasm. Its subcellular location is the nucleus. In terms of biological role, may negatively regulate cell cycle progression. May act at least in part via inhibition of the cyclin-D1/CDK4 complex, thereby preventing phosphorylation of RB1 and blocking E2F-dependent transcription. This is Cyclin-D1-binding protein 1 (CCNDBP1) from Bos taurus (Bovine).